Consider the following 402-residue polypeptide: Arginine deiminase (402 aa).

Catalysis depends on Cys-391, which acts as the Amidino-cysteine intermediate.

It belongs to the arginine deiminase family.

The protein localises to the cytoplasm. It catalyses the reaction L-arginine + H2O = L-citrulline + NH4(+). Its pathway is amino-acid degradation; L-arginine degradation via ADI pathway; carbamoyl phosphate from L-arginine: step 1/2. The protein is Arginine deiminase of Mycobacterium marinum (strain ATCC BAA-535 / M).